Reading from the N-terminus, the 371-residue chain is NDMA-dependent alcohol dehydrogenase (371 aa).

7 residues coordinate Zn(2+): Cys-40, His-61, Cys-91, Cys-94, Cys-97, Cys-105, and Cys-167.

It belongs to the zinc-containing alcohol dehydrogenase family. Homotrimer. NADH is required as a cofactor.

It carries out the reaction N,N-dimethyl-4-nitrosoaniline + a primary alcohol = 4-(hydroxylamino)-N,N-dimethylaniline + an aldehyde. The catalysed reaction is ethanol + A = acetaldehyde + AH2. Its activity is regulated as follows. Inhibited by trans-4-(N,N-dimethylamino)-cinnamaldehyde through direct binding to the catalytic zinc ion in a substrate-like geometry. Isobutyramide acts as a competitive inhibitor with respect to the electron acceptor NDMA. Acetaldehyde, AMP, ADP, ATP, as well as CuSO(4), FeSO(4), HgCl(2), NiCl(2), ZnSO(4), KCN, and NaN(3) are additional inhibitors of the catalytic activity. In terms of biological role, catalytically different from common alcohol dehydrogenases. Effective in oxidizing ethanol, other primary alcohols and benzylalcohol only in the presence of p-nitroso-N,N-dimethylaniline (NDMA) as an electron acceptor. NADH acts as a cofactor here instead as a coenzyme. This chain is NDMA-dependent alcohol dehydrogenase, found in Amycolatopsis methanolica.